Consider the following 590-residue polypeptide: Conglutin beta 4 (590 aa).

An N-terminal signal peptide occupies residues 1–30 (MIKMRVRFPTLVLLLGIVFLMAVSIGIAYG). Over residues 38–105 (HERPQEREQE…REPRREREQE (68 aa)) the composition is skewed to basic and acidic residues. The disordered stretch occupies residues 38–175 (HERPQEREQE…DSRRQRNPYY (138 aa)). Over residues 137–146 (QGSSSSSRRQ) the composition is skewed to low complexity. Residues 174–332 (YYFSSERFQT…TFNTRYEEIQ (159 aa)) enclose the Cupin type-1 1 domain. A glycan (N-linked (GlcNAc...) asparagine) is linked at asparagine 239. Disordered stretches follow at residues 340–362 (DEQE…GVIV) and 374–396 (KYAQ…LRSN). Over residues 346 to 362 (EQRHGQEQSHQDEGVIV) the composition is skewed to basic and acidic residues. The 158-residue stretch at 391–548 (FNLRSNKPIY…TFPGSTEDVE (158 aa)) folds into the Cupin type-1 2 domain. N-linked (GlcNAc...) asparagine glycosylation is present at asparagine 498. Residues 559–579 (FANAQPQQQQQREREGRRGRR) form a disordered region.

The protein belongs to the 7S seed storage protein family. Component of globulins complexes which accumulate in seeds.

Functionally, seed storage protein. Accumulates during seed development and is hydrolyzed after germination to provide a carbon and nitrogen source for the developing seedling. In Lupinus angustifolius (Narrow-leaved blue lupine), this protein is Conglutin beta 4.